The chain runs to 186 residues: Akirin-1 (186 aa).

Residues 1–64 (MACGATLKRS…PLPQLGGDRR (64 aa)) are disordered. Residues 22–27 (PKRRRC) carry the Nuclear localization signal motif. Over residues 49–60 (QQGQQQPLPQLG) the composition is skewed to low complexity. Positions 183 to 186 (SYVS) match the SYVS motif motif.

It belongs to the akirin family.

It localises to the nucleus. Molecular adapter that acts as a bridge between proteins, and which is involved skeletal muscle development. Functions as a signal transducer for MSTN during skeletal muscle regeneration and myogenesis. This chain is Akirin-1, found in Xenopus tropicalis (Western clawed frog).